We begin with the raw amino-acid sequence, 122 residues long: Large ribosomal subunit protein uL14 (122 aa).

This sequence belongs to the universal ribosomal protein uL14 family. As to quaternary structure, part of the 50S ribosomal subunit. Forms a cluster with proteins L3 and L19. In the 70S ribosome, L14 and L19 interact and together make contacts with the 16S rRNA in bridges B5 and B8.

Functionally, binds to 23S rRNA. Forms part of two intersubunit bridges in the 70S ribosome. The chain is Large ribosomal subunit protein uL14 from Sinorhizobium fredii (strain NBRC 101917 / NGR234).